The primary structure comprises 569 residues: Putative potassium-transporting ATPase ATP-binding subunit (569 aa).

Transmembrane regions (helical) follow at residues 34 to 54 and 58 to 78; these read PVMFVVWAGSVLATLLTLAMV and IAGSALFTGVISLWLWFTVLF. Aspartate 194 acts as the 4-aspartylphosphate intermediate in catalysis. Residues aspartate 231, glutamate 235, 264 to 271, and lysine 282 contribute to the ATP site; that span reads FTAQSRMS. 2 residues coordinate Mg(2+): aspartate 405 and aspartate 409. The next 3 membrane-spanning stretches (helical) occupy residues 475–495, 503–523, and 543–563; these read FAIIPAAFAATYPQLNALNVM, AILSAVIFNALIIIFLIPLAL, and IYGLGGLVVPFIGIKVIDVLL.

It belongs to the cation transport ATPase (P-type) (TC 3.A.3) family. Type IA subfamily. As to quaternary structure, the system is composed of three essential subunits: KdpA, KdpB and KdpC.

It localises to the cell inner membrane. It catalyses the reaction K(+)(out) + ATP + H2O = K(+)(in) + ADP + phosphate + H(+). Functionally, part of the high-affinity ATP-driven potassium transport (or Kdp) system, which catalyzes the hydrolysis of ATP coupled with the electrogenic transport of potassium into the cytoplasm. This subunit is responsible for energy coupling to the transport system and for the release of the potassium ions to the cytoplasm. The protein is Putative potassium-transporting ATPase ATP-binding subunit of Salmonella typhi.